Here is a 408-residue protein sequence, read N- to C-terminus: Imidazolonepropionase (408 aa).

Residues histidine 73 and histidine 75 each contribute to the Fe(3+) site. Zn(2+) contacts are provided by histidine 73 and histidine 75. 3 residues coordinate 4-imidazolone-5-propanoate: arginine 82, tyrosine 145, and histidine 178. An N-formimidoyl-L-glutamate-binding site is contributed by tyrosine 145. Histidine 243 lines the Fe(3+) pocket. Zn(2+) is bound at residue histidine 243. Glutamine 246 provides a ligand contact to 4-imidazolone-5-propanoate. Residue aspartate 318 coordinates Fe(3+). Residue aspartate 318 coordinates Zn(2+). Residues asparagine 320 and glycine 322 each contribute to the N-formimidoyl-L-glutamate site. Serine 323 contributes to the 4-imidazolone-5-propanoate binding site.

The protein belongs to the metallo-dependent hydrolases superfamily. HutI family. Zn(2+) serves as cofactor. Fe(3+) is required as a cofactor.

Its subcellular location is the cytoplasm. The enzyme catalyses 4-imidazolone-5-propanoate + H2O = N-formimidoyl-L-glutamate. It functions in the pathway amino-acid degradation; L-histidine degradation into L-glutamate; N-formimidoyl-L-glutamate from L-histidine: step 3/3. Catalyzes the hydrolytic cleavage of the carbon-nitrogen bond in imidazolone-5-propanoate to yield N-formimidoyl-L-glutamate. It is the third step in the universal histidine degradation pathway. The sequence is that of Imidazolonepropionase from Shewanella oneidensis (strain ATCC 700550 / JCM 31522 / CIP 106686 / LMG 19005 / NCIMB 14063 / MR-1).